The sequence spans 699 residues: tRNA(Met) cytidine acetyltransferase TmcA (699 aa).

ATP is bound by residues glutamine 178, 200 to 209 (GRGKSTLAGM), and arginine 322. An N-acetyltransferase domain is found at 408–547 (MHIASAQVAG…SGCYSAMAIL (140 aa)). Residues 475–477 (IAV) and 482–488 (RRQGIGR) contribute to the acetyl-CoA site.

The protein belongs to the RNA cytidine acetyltransferase family. TmcA subfamily.

The protein resides in the cytoplasm. The catalysed reaction is cytidine(34) in elongator tRNA(Met) + acetyl-CoA + ATP + H2O = N(4)-acetylcytidine(34) in elongator tRNA(Met) + ADP + phosphate + CoA + H(+). Catalyzes the formation of N(4)-acetylcytidine (ac(4)C) at the wobble position of tRNA(Met), by using acetyl-CoA as an acetyl donor and ATP (or GTP). This chain is tRNA(Met) cytidine acetyltransferase TmcA, found in Pectobacterium atrosepticum (strain SCRI 1043 / ATCC BAA-672) (Erwinia carotovora subsp. atroseptica).